We begin with the raw amino-acid sequence, 61 residues long: Large ribosomal subunit protein uL30 (61 aa).

It belongs to the universal ribosomal protein uL30 family. In terms of assembly, part of the 50S ribosomal subunit.

This chain is Large ribosomal subunit protein uL30, found in Corynebacterium jeikeium (strain K411).